Here is a 193-residue protein sequence, read N- to C-terminus: Ion-translocating oxidoreductase complex subunit A (193 aa).

Helical transmembrane passes span 5–25 (FLLFVGTVLVNNFVLVKFLGL), 39–59 (IGMGFATTFVMTLASVCSWLV), 62–82 (FILLPLDLIYLRTLSFILVIA), 102–122 (LLGIFLPLITTNCAVLGVALL), 134–154 (AIYGFGAAAGFSLVMVLFAAI), and 171–191 (SIGLITAGLMSLAFMGFSGLV).

The protein belongs to the NqrDE/RnfAE family. In terms of assembly, the complex is composed of six subunits: RnfA, RnfB, RnfC, RnfD, RnfE and RnfG.

The protein resides in the cell inner membrane. Its function is as follows. Part of a membrane-bound complex that couples electron transfer with translocation of ions across the membrane. In Photorhabdus laumondii subsp. laumondii (strain DSM 15139 / CIP 105565 / TT01) (Photorhabdus luminescens subsp. laumondii), this protein is Ion-translocating oxidoreductase complex subunit A.